Consider the following 496-residue polypeptide: Deoxyribodipyrimidine photo-lyase (496 aa).

One can recognise a Photolyase/cryptochrome alpha/beta domain in the interval 28 to 160; it reads GPVVYWMFRD…EVDAHNVVPM (133 aa). FAD-binding positions include Y256, 269 to 273, 307 to 315, and 415 to 417; these read LSGLS, ELIVRRELS, and DGR. E307 lines the DNA pocket.

Belongs to the DNA photolyase class-2 family. FAD is required as a cofactor. As to expression, highly expressed in flowers. Expressed in roots and stems.

The protein localises to the nucleus. The enzyme catalyses cyclobutadipyrimidine (in DNA) = 2 pyrimidine residues (in DNA).. In terms of biological role, involved in repair of UV radiation-induced DNA damage. Catalyzes the light-dependent monomerization (300-600 nm) of cyclobutylpyrimidine dimers (CPDs), which are formed between adjacent bases on the same DNA strand upon exposure to ultraviolet radiation. Required for plant survival in the presence of UV-B light. Not involved in the repair of (6-4) photoproducts. The polypeptide is Deoxyribodipyrimidine photo-lyase (PHR1) (Arabidopsis thaliana (Mouse-ear cress)).